Consider the following 336-residue polypeptide: Inactive serine/threonine-protein kinase PLK5 (336 aa).

The 65-residue stretch at 1–65 folds into the Protein kinase; truncated domain; the sequence is MYTVLTGTPP…LDHLLQDDFF (65 aa). 2 disordered regions span residues 109–135 and 224–245; these read PCPFTPKEASGPGEGGPDPDSMEWDGE and GRTGRHPHGPATPRREGTLPTP. One can recognise a POLO box domain in the interval 255–336; that stretch reads LLRFLASEHA…HHALRMLQSI (82 aa).

It belongs to the protein kinase superfamily. Ser/Thr protein kinase family. CDC5/Polo subfamily. In terms of tissue distribution, expressed in the brain, neurons and glial cells. Also expressed in highly differentiated cells, such as the serous acini in the parotid gland, distal and proximal tubules of the kidney, tubules of the seminal gland, Kupffer cells and some hepatocytes in the liver, and some cells in the germinal center of lymph nodes (at protein level).

It localises to the nucleus. It is found in the nucleolus. Its subcellular location is the cytoplasm. Inactive serine/threonine-protein kinase that plays a role in cell cycle progression and neuronal differentiation. This chain is Inactive serine/threonine-protein kinase PLK5 (PLK5), found in Homo sapiens (Human).